Consider the following 382-residue polypeptide: Gap junction alpha-1 protein (382 aa).

The Cytoplasmic segment spans residues 2–23 (GDWSALGKLLDKVQAYSTAGGK). Phosphoserine is present on S5. The chain crosses the membrane as a helical span at residues 24–44 (VWLSVLFIFRILLLGTAVESA). The Extracellular segment spans residues 45-76 (WGDEQSAFRCNTQQPGCENVCYDKSFPISHVR). Disulfide bonds link C54–C192 and C187–C198. The chain crosses the membrane as a helical span at residues 77–97 (FWVLQIIFVSVPTLLYLAHVF). Residues 98 to 155 (YVMRKEEKLNKKEEELKVAQTDGVNVEMHLKQIEIKKFKYGIEEHGKVKMRGGLLRTY) lie on the Cytoplasmic side of the membrane. A Glycyl lysine isopeptide (Lys-Gly) (interchain with G-Cter in SUMO) cross-link involves residue K144. Residues 156 to 176 (IISILFKSIFEVAFLLIQWYI) form a helical membrane-spanning segment. The Extracellular portion of the chain corresponds to 177–207 (YGFSLSAVYTCKRDPCPHQVDCFLSRPTEKT). Residues 208-228 (IFIIFMLVVSLVSLALNIIEL) traverse the membrane as a helical segment. At 229-382 (FYVFFKGVKD…SRPRPDDLEI (154 aa)) the chain is on the cytoplasmic side. K237 is covalently cross-linked (Glycyl lysine isopeptide (Lys-Gly) (interchain with G-Cter in SUMO)). The interaction with NOV stretch occupies residues 244 to 382 (SDPYHATSGA…SRPRPDDLEI (139 aa)). Y247 is modified (phosphotyrosine). Residues S255 and S262 each carry the phosphoserine modification. Residues 264–382 (KYAYFNGCSS…SRPRPDDLEI (119 aa)) form an interaction with UBQLN4 region. C271 is modified (S-nitrosocysteine). Position 275 is a phosphothreonine (T275). The interval 279–300 (SPMSPPGYKPVTGDRNNSSCRN) is disordered. Phosphoserine is present on residues S306 and S314. Residues 317–332 (QNRMGQAGSTISNSHA) are compositionally biased toward polar residues. Residues 317–382 (QNRMGQAGST…SRPRPDDLEI (66 aa)) form a disordered region. Position 325 is a phosphoserine; by CK1 (S325). At T326 the chain carries Phosphothreonine. 2 positions are modified to phosphoserine; by CK1: S328 and S330. Phosphoserine is present on residues S344 and S365. The segment covering 362–374 (RPSSRASSRASSR) has biased composition (low complexity). The residue at position 368 (S368) is a Phosphoserine; by PKC/PRKCG and PKC/PRKCD. Phosphoserine occurs at positions 369 and 373.

Belongs to the connexin family. Alpha-type (group II) subfamily. In terms of assembly, a connexon is composed of a hexamer of connexins. Interacts with SGSM3. Interacts with RIC1/CIP150. Interacts with CNST and CSNK1D. Interacts (via C-terminus) with TJP1. Interacts (via C-terminus) with SRC (via SH3 domain). Interacts (not ubiquitinated) with UBQLN4 (via UBA domain). Interacts with NOV. Interacts with TMEM65. Interacts with ANK3/ANKG and PKP2. In terms of processing, phosphorylation at Ser-325, Ser-328 and Ser-330 by CK1 modulates gap junction assembly. Phosphorylated at Ser-368 by PRKCG; phosphorylation induces disassembly of gap junction plaques and inhibition of gap junction activity. Phosphorylation at Ser-368 by PRKCD triggers its internalization into small vesicles leading to proteasome-mediated degradation. Post-translationally, sumoylated with SUMO1, SUMO2 and SUMO3, which may regulate the level of functional Cx43 gap junctions at the plasma membrane. May be desumoylated by SENP1 or SENP2. S-nitrosylation at Cys-271 is enriched at the muscle endothelial gap junction in arteries, it augments channel permeability and may regulate of smooth muscle cell to endothelial cell communication. In terms of processing, acetylated in the developing cortex; leading to delocalization from the cell membrane.

It localises to the cell membrane. The protein localises to the cell junction. Its subcellular location is the gap junction. The protein resides in the endoplasmic reticulum. In terms of biological role, gap junction protein that acts as a regulator of bladder capacity. A gap junction consists of a cluster of closely packed pairs of transmembrane channels, the connexons, through which materials of low MW diffuse from one cell to a neighboring cell. May play a critical role in the physiology of hearing by participating in the recycling of potassium to the cochlear endolymph. Negative regulator of bladder functional capacity: acts by enhancing intercellular electrical and chemical transmission, thus sensitizing bladder muscles to cholinergic neural stimuli and causing them to contract. May play a role in cell growth inhibition through the regulation of NOV expression and localization. Plays an essential role in gap junction communication in the ventricles. The protein is Gap junction alpha-1 protein (GJA1) of Macaca fascicularis (Crab-eating macaque).